Reading from the N-terminus, the 241-residue chain is uncharacterized protein (241 aa).

It belongs to the AB hydrolase superfamily. AB hydrolase 2 family.

This is an uncharacterized protein from Schizosaccharomyces pombe (strain 972 / ATCC 24843) (Fission yeast).